Here is a 102-residue protein sequence, read N- to C-terminus: Small ribosomal subunit protein uS10 (102 aa).

The segment at 34-58 is disordered; that stretch reads VSGPVPLPTKTLEVPSRKSPDGEGT.

This sequence belongs to the universal ribosomal protein uS10 family. In terms of assembly, part of the 30S ribosomal subunit.

Functionally, involved in the binding of tRNA to the ribosomes. This chain is Small ribosomal subunit protein uS10, found in Halobacterium salinarum (strain ATCC 29341 / DSM 671 / R1).